Reading from the N-terminus, the 318-residue chain is Probable endolytic peptidoglycan transglycosylase RlpA (318 aa).

The N-terminal stretch at 1–21 is a signal peptide; that stretch reads MMDKRVVAVAAVLWNVQMLFA. The tract at residues 121-191 is disordered; the sequence is DPNAHASQQR…GVANTTDVPA (71 aa). Residues 125–137 are compositionally biased toward polar residues; it reads HASQQRNDRQTSP.

The protein belongs to the RlpA family.

Functionally, lytic transglycosylase with a strong preference for naked glycan strands that lack stem peptides. The chain is Probable endolytic peptidoglycan transglycosylase RlpA from Treponema pallidum (strain Nichols).